The following is a 517-amino-acid chain: N-acetylglucosamine-1-phosphodiester alpha-N-acetylglucosaminidase (517 aa).

The first 25 residues, 1-25, serve as a signal peptide directing secretion; sequence MAAPRGPGLFLIPALLGLLGVAWCS. The propeptide at 26–49 is removed in mature form; that stretch reads LSFGVSRDDDLLLPYPLARRRPSR. Residues 49 to 75 form a disordered region; it reads RDCARVRSGSPEQESWPPPPTNPGASH. Topologically, residues 50–453 are lumenal; it reads DCARVRSGSP…ASFTRTTWLA (404 aa). 5 cysteine pairs are disulfide-bonded: cysteine 116/cysteine 149, cysteine 133/cysteine 324, cysteine 308/cysteine 315, cysteine 363/cysteine 374, and cysteine 381/cysteine 390. Residues asparagine 215 and asparagine 297 are each glycosylated (N-linked (GlcNAc...) asparagine). The EGF-like domain maps to 359–391; it reads SELDCGPSNCSQHGLCTETGCHCDAGWTGSNCS. Asparagine 367, asparagine 389, and asparagine 421 each carry an N-linked (GlcNAc...) asparagine glycan. A helical transmembrane segment spans residues 454 to 474; sequence LTLTLIFLLLISTGVNVSLFL. Over 475 to 517 the chain is Cytoplasmic; sequence GSRAERNRHLDGDYVYHPLQEVNGEALTAEKEHMEETSNPFKD. A Tyrosine-based internalization motif motif is present at residues 488–491; it reads YVYH. Positions 488 to 495 are mediates the interaction with AP4M1; the sequence is YVYHPLQE. Positions 511–515 match the NPF internalization motif motif; the sequence is TSNPF.

Homotetramer arranged as two disulfide-linked homodimers. Interacts with AP4M1. In terms of processing, the precursor is cleaved and activated in the trans-Golgi network by a furin endopeptidase.

The protein localises to the golgi apparatus. It localises to the golgi stack membrane. The protein resides in the trans-Golgi network. It catalyses the reaction N(4)-[6-(N-acetyl-alpha-D-glucosaminyl-1-phospho)-alpha-D-mannosyl-(1-&gt;2)-alpha-D-mannosyl-(glycan)]-L-asparaginyl-[protein] + H2O = N(4)-[6-phospho-alpha-D-mannosyl-(1-&gt;2)-alpha-D-mannosyl-(glycan)]-L-asparaginyl-[protein] + N-acetyl-D-glucosamine + H(+). The protein operates within protein modification; protein glycosylation. Its function is as follows. Catalyzes the second step in the formation of the mannose 6-phosphate targeting signal on lysosomal enzyme oligosaccharides by removing GlcNAc residues from GlcNAc-alpha-P-mannose moieties, which are formed in the first step. Also hydrolyzes UDP-GlcNAc, a sugar donor for Golgi N-acetylglucosaminyltransferases. This is N-acetylglucosamine-1-phosphodiester alpha-N-acetylglucosaminidase (Nagpa) from Mus musculus (Mouse).